A 187-amino-acid chain; its full sequence is Large ribosomal subunit protein eL18x (187 aa).

The disordered stretch occupies residues 150–187; that stretch reads HFGPAPGVPHSNTKPYVRHKGRKFEKARGKRKSRGFKV. The segment covering 165–187 has biased composition (basic residues); that stretch reads YVRHKGRKFEKARGKRKSRGFKV.

Belongs to the eukaryotic ribosomal protein eL18 family.

The polypeptide is Large ribosomal subunit protein eL18x (RPL18C) (Arabidopsis thaliana (Mouse-ear cress)).